The following is a 955-amino-acid chain: Outer capsid protein VP2 (955 aa).

The protein belongs to the orbivirus VP2 family.

Its subcellular location is the virion. Its function is as follows. The VP2 protein is one of the two proteins (with VP5) which constitute the virus particle outer capsid. It is the major target of the host immunogenic response. Responsible for viral attachment to target host cell, probably by binding to sialic acid. This attachment induces virion internalization predominantly through clathrin-dependent endocytosis. This chain is Outer capsid protein VP2 (Segment-2), found in Antilocapra americana (Pronghorn).